A 431-amino-acid chain; its full sequence is Septin-11 (431 aa).

Ala2 carries the post-translational modification N-acetylalanine. A Phosphoserine modification is found at Ser9. In terms of domain architecture, Septin-type G spans 38–304 (QGFCFNILCV…ELYRRCKLEE (267 aa)). The segment at 48–55 (GETGIGKS) is G1 motif. GTP-binding positions include 48 to 55 (GETGIGKS), Gly103, 184 to 192 (KADTIAKNE), Gly238, and Arg253. Positions 100–103 (DTVG) are G3 motif. Positions 183–186 (AKAD) are G4 motif. A coiled-coil region spans residues 320-413 (QETYEAKRNE…LLQSQAQQSG (94 aa)). A disordered region spans residues 400–431 (AAAQLLQSQAQQSGAQQTKKDKDKKNPWLCTE). A compositionally biased stretch (low complexity) spans 401-416 (AAQLLQSQAQQSGAQQ).

The protein belongs to the TRAFAC class TrmE-Era-EngA-EngB-Septin-like GTPase superfamily. Septin GTPase family. In terms of assembly, septins polymerize into heterooligomeric protein complexes that form filaments, and can associate with cellular membranes, actin filaments and microtubules. Forms homooligomers. GTPase activity is required for filament formation. Interacts with SEPTIN7, SEPTIN9 and SEPTIN12. Expressed in the cerebral cortex (at protein level).

It localises to the cytoplasm. The protein localises to the cytoskeleton. The protein resides in the synapse. It is found in the cell projection. Its subcellular location is the dendritic spine. It localises to the axon. Functionally, filament-forming cytoskeletal GTPase. May play a role in cytokinesis (Potential). May play a role in the cytoarchitecture of neurons, including dendritic arborization and dendritic spines, and in GABAergic synaptic connectivity. This Mus musculus (Mouse) protein is Septin-11.